The sequence spans 310 residues: Ribosomal RNA large subunit methyltransferase F (310 aa).

Belongs to the methyltransferase superfamily. METTL16/RlmF family.

The protein localises to the cytoplasm. The enzyme catalyses adenosine(1618) in 23S rRNA + S-adenosyl-L-methionine = N(6)-methyladenosine(1618) in 23S rRNA + S-adenosyl-L-homocysteine + H(+). Its function is as follows. Specifically methylates the adenine in position 1618 of 23S rRNA. The protein is Ribosomal RNA large subunit methyltransferase F of Pseudoalteromonas translucida (strain TAC 125).